A 373-amino-acid chain; its full sequence is IHGDNKTRKGERKLHEERWQAASAAAHQHLSTPQTAAGGGRVLREVTLEMPIRYAPSDAVEKWLNNLLCLDCGSTPNRIIGGTPHPRECELYYVDRDSLFSYHKLSESFLQRIMALYVASHYKNQPNDLQLLSDAPAHHIFVLLGPQAEGQGNAGQLPDVLCVVQVALEGEISKESVAAQLSRGQRASGDLIPWTVAQQFQDNEFAGLSGARVVRIATHPDVTGMGYGSRAVELLTKYYQGELASGEFEEENEAAKPADEESDDESNLLKEKVKPRKALPPLLLPLTDRPAERLHWFGTSFGLTLQLYTFWQRSGFRSVYIRQTANPLTGEHTAIMLNALKCDDLPASPAAGWLDEFVGDARKRFMALLAYEF.

An ATP-binding site is contributed by arginine 53. Acetyl-CoA contacts are provided by residues 216–218 (IAT) and 223–229 (TGMGYGS). The interval 246–271 (GEFEEENEAAKPADEESDDESNLLKE) is disordered. Arginine 313 provides a ligand contact to acetyl-CoA.

The protein belongs to the RNA cytidine acetyltransferase family. NAT10 subfamily.

The protein localises to the nucleus. The protein resides in the nucleolus. It carries out the reaction a cytidine in 18S rRNA + acetyl-CoA + ATP + H2O = an N(4)-acetylcytidine in 18S rRNA + ADP + phosphate + CoA + H(+). It catalyses the reaction a cytidine in tRNA + acetyl-CoA + ATP + H2O = an N(4)-acetylcytidine in tRNA + ADP + phosphate + CoA + H(+). Its function is as follows. RNA cytidine acetyltransferase with specificity toward both 18S rRNA and tRNAs. Catalyzes the formation of N(4)-acetylcytidine (ac4C) in 18S rRNA. Required for early nucleolar cleavages of precursor rRNA at sites A0, A1 and A2 during 18S rRNA synthesis. Catalyzes the formation of ac4C in serine and leucine tRNAs. Requires a tRNA-binding adapter protein for full tRNA acetyltransferase activity but not for 18S rRNA acetylation. This Achlya ambisexualis (Water mold) protein is RNA cytidine acetyltransferase.